A 62-amino-acid chain; its full sequence is Large ribosomal subunit protein uL29 (62 aa).

The protein belongs to the universal ribosomal protein uL29 family.

This is Large ribosomal subunit protein uL29 from Desulfosudis oleivorans (strain DSM 6200 / JCM 39069 / Hxd3) (Desulfococcus oleovorans).